The following is a 326-amino-acid chain: Neuferricin homolog (326 aa).

An N-terminal signal peptide occupies residues 1-34 (MDKNRRRTDDAGLMTKTLAGIAALVFFLSFICSS). In terms of domain architecture, Cytochrome b5 heme-binding spans 98–197 (KHVFTPEQLH…KEYPLVGVVA (100 aa)).

Belongs to the cytochrome b5 family. MAPR subfamily.

It is found in the secreted. Heme-binding protein. This is Neuferricin homolog (tag-131) from Caenorhabditis elegans.